Reading from the N-terminus, the 92-residue chain is Small ribosomal subunit protein uS15c (92 aa).

The protein belongs to the universal ribosomal protein uS15 family. As to quaternary structure, part of the 30S ribosomal subunit.

It is found in the plastid. The protein localises to the chloroplast. This is Small ribosomal subunit protein uS15c (rps15) from Carica papaya (Papaya).